The primary structure comprises 498 residues: Glycerol kinase (498 aa).

Thr-12 lines the ADP pocket. Residues Thr-12, Thr-13, and Ser-14 each coordinate ATP. Thr-12 lines the sn-glycerol 3-phosphate pocket. Arg-16 is a binding site for ADP. Sn-glycerol 3-phosphate-binding residues include Arg-82, Glu-83, and Tyr-134. Residues Arg-82, Glu-83, and Tyr-134 each coordinate glycerol. Position 230 is a phosphohistidine; by HPr (His-230). Residue Asp-244 coordinates sn-glycerol 3-phosphate. Positions 244 and 245 each coordinate glycerol. Thr-266, Gly-309, Gln-313, Gly-410, and Asn-414 together coordinate ADP. 4 residues coordinate ATP: Thr-266, Gly-309, Gln-313, and Gly-410.

The protein belongs to the FGGY kinase family. Homotetramer and homodimer (in equilibrium). Post-translationally, the phosphoenolpyruvate-dependent sugar phosphotransferase system (PTS), including enzyme I, and histidine-containing protein (HPr) are required for the phosphorylation, which leads to the activation of the enzyme.

It carries out the reaction glycerol + ATP = sn-glycerol 3-phosphate + ADP + H(+). The protein operates within polyol metabolism; glycerol degradation via glycerol kinase pathway; sn-glycerol 3-phosphate from glycerol: step 1/1. Its activity is regulated as follows. Activated by phosphorylation and inhibited by fructose 1,6-bisphosphate (FBP). In terms of biological role, key enzyme in the regulation of glycerol uptake and metabolism. Catalyzes the phosphorylation of glycerol to yield sn-glycerol 3-phosphate. The chain is Glycerol kinase from Staphylococcus aureus (strain COL).